Reading from the N-terminus, the 160-residue chain is SsrA-binding protein (160 aa).

Positions 133-160 (KKEHDKREDLKEREWQRDKERMMKNKGR) are disordered.

Belongs to the SmpB family.

The protein localises to the cytoplasm. Required for rescue of stalled ribosomes mediated by trans-translation. Binds to transfer-messenger RNA (tmRNA), required for stable association of tmRNA with ribosomes. tmRNA and SmpB together mimic tRNA shape, replacing the anticodon stem-loop with SmpB. tmRNA is encoded by the ssrA gene; the 2 termini fold to resemble tRNA(Ala) and it encodes a 'tag peptide', a short internal open reading frame. During trans-translation Ala-aminoacylated tmRNA acts like a tRNA, entering the A-site of stalled ribosomes, displacing the stalled mRNA. The ribosome then switches to translate the ORF on the tmRNA; the nascent peptide is terminated with the 'tag peptide' encoded by the tmRNA and targeted for degradation. The ribosome is freed to recommence translation, which seems to be the essential function of trans-translation. This is SsrA-binding protein from Tolumonas auensis (strain DSM 9187 / NBRC 110442 / TA 4).